Here is a 218-residue protein sequence, read N- to C-terminus: Phosphatidylserine decarboxylase proenzyme (218 aa).

The active-site Schiff-base intermediate with substrate; via pyruvic acid is the S188. S188 is modified (pyruvic acid (Ser); by autocatalysis).

The protein belongs to the phosphatidylserine decarboxylase family. PSD-A subfamily. As to quaternary structure, heterodimer of a large membrane-associated beta subunit and a small pyruvoyl-containing alpha subunit. Pyruvate is required as a cofactor. Is synthesized initially as an inactive proenzyme. Formation of the active enzyme involves a self-maturation process in which the active site pyruvoyl group is generated from an internal serine residue via an autocatalytic post-translational modification. Two non-identical subunits are generated from the proenzyme in this reaction, and the pyruvate is formed at the N-terminus of the alpha chain, which is derived from the carboxyl end of the proenzyme. The post-translation cleavage follows an unusual pathway, termed non-hydrolytic serinolysis, in which the side chain hydroxyl group of the serine supplies its oxygen atom to form the C-terminus of the beta chain, while the remainder of the serine residue undergoes an oxidative deamination to produce ammonia and the pyruvoyl prosthetic group on the alpha chain.

The protein resides in the cell membrane. The enzyme catalyses a 1,2-diacyl-sn-glycero-3-phospho-L-serine + H(+) = a 1,2-diacyl-sn-glycero-3-phosphoethanolamine + CO2. Its pathway is phospholipid metabolism; phosphatidylethanolamine biosynthesis; phosphatidylethanolamine from CDP-diacylglycerol: step 2/2. Catalyzes the formation of phosphatidylethanolamine (PtdEtn) from phosphatidylserine (PtdSer). This chain is Phosphatidylserine decarboxylase proenzyme, found in Streptomyces coelicolor (strain ATCC BAA-471 / A3(2) / M145).